The primary structure comprises 162 residues: Tegument protein BLRF2 (162 aa).

Positions 12–43 (VKAVDMSMEDMAARLARLESENKALKQQVLRG) form a coiled coil. The segment at 121-162 (GAKGQPSPGEGTRLRESNDPNATRRARSRSRGREAKKVQISD) is disordered. Positions 151–162 (RGREAKKVQISD) are enriched in basic and acidic residues.

It belongs to the herpesviridae BLRF2 family. In terms of assembly, homooligomer; homooligomerizes and binds double-stranded DNA (dsDNA) cooperatively. Interacts with host CGAS.

The protein resides in the virion tegument. It localises to the host cytoplasm. Functionally, plays a role in the inhibition of host innate immune system by targeting the CGAS enzymatic activity which is the principal cytosolic DNA sensor that detects invading viral DNA. Acts by inhibiting CGAS-DNA phase separation: directly binds double-stranded DNA (dsDNA) in a length dependent but sequence independent manner and is able to form DNA-induced phase separation in infected cells. DNA phase separation of ORF52 mediates disruption of liquid-like droplets in which CGAS is activated, thereby preventing CGAS activity. The sequence is that of Tegument protein BLRF2 from Epstein-Barr virus (strain GD1) (HHV-4).